Reading from the N-terminus, the 488-residue chain is Glutamate synthase [NADPH] small chain (488 aa).

The 4Fe-4S ferredoxin-type domain maps to 38–69 (ESLRQQATRCMDCGIPFCHNGCPLGNLIPEWN).

The cofactor is [4Fe-4S] cluster.

The enzyme catalyses 2 L-glutamate + NADP(+) = L-glutamine + 2-oxoglutarate + NADPH + H(+). It participates in amino-acid biosynthesis; L-glutamate biosynthesis via GLT pathway; L-glutamate from 2-oxoglutarate and L-glutamine (NADP(+) route): step 1/1. The chain is Glutamate synthase [NADPH] small chain (gltD) from Mycobacterium tuberculosis (strain CDC 1551 / Oshkosh).